Consider the following 350-residue polypeptide: MSTRLGDLVERLGGRLIGDADIEVVGIAPLGDADASHITFLSNPKLRGQAAQTRAAALILSAADDEIVAANYQGARIVADNPYAYFARAAQLFAALHAYVAPAGIHPTASVDPQAKVAASASIGPHVTVEAGAIIENACVIDAGCFIGRNARIGAATHFYPRVTFLAGCSIGQRGIVHPGAVIGADGFGFANEGGAWIKIPQTGAVSIGDDVEIGANTSIDRGALADTVIEDGVKLDNQIQIGHNCHIGAHTAMAGCVGVAGSAVIGKYCTFGGAAMVLGHLTIADRVHISSGSLVSRSIKEPGQYTGFYPLAKNAEWEKSAVIVRNLAAMREKIREMEKTIKSLGDEQE.

The active-site Proton acceptor is the His244.

Belongs to the transferase hexapeptide repeat family. LpxD subfamily. In terms of assembly, homotrimer.

The enzyme catalyses a UDP-3-O-[(3R)-3-hydroxyacyl]-alpha-D-glucosamine + a (3R)-hydroxyacyl-[ACP] = a UDP-2-N,3-O-bis[(3R)-3-hydroxyacyl]-alpha-D-glucosamine + holo-[ACP] + H(+). The protein operates within bacterial outer membrane biogenesis; LPS lipid A biosynthesis. Its function is as follows. Catalyzes the N-acylation of UDP-3-O-acylglucosamine using 3-hydroxyacyl-ACP as the acyl donor. Is involved in the biosynthesis of lipid A, a phosphorylated glycolipid that anchors the lipopolysaccharide to the outer membrane of the cell. The protein is UDP-3-O-acylglucosamine N-acyltransferase of Herminiimonas arsenicoxydans.